We begin with the raw amino-acid sequence, 187 residues long: MILIIDNHGQYVHLIRKNFDYMGVPAEIIPNTTDPEDVRERASGVVISGGPSRERAGNSREIIEELTGEVPILGICLGHQLMAEVFGGKVDWAAGREEYARTEVEILDHEGIFEGLPDKIVAWASHRDEVKEVPDEFVVTARSDRCEVEAMRHEELPLYGVQFHPELKFTEYGPDILKNFAKLCGEL.

Positions 1–187 (MILIIDNHGQ…KNFAKLCGEL (187 aa)) constitute a Glutamine amidotransferase type-1 domain. Residue cysteine 76 is the Nucleophile of the active site. Residues histidine 164 and glutamate 166 contribute to the active site.

As to quaternary structure, heterodimer composed of a glutamine amidotransferase subunit (A) and a GMP-binding subunit (B).

The catalysed reaction is XMP + L-glutamine + ATP + H2O = GMP + L-glutamate + AMP + diphosphate + 2 H(+). It functions in the pathway purine metabolism; GMP biosynthesis; GMP from XMP (L-Gln route): step 1/1. Its function is as follows. Catalyzes the synthesis of GMP from XMP. This chain is GMP synthase [glutamine-hydrolyzing] subunit A, found in Methanopyrus kandleri (strain AV19 / DSM 6324 / JCM 9639 / NBRC 100938).